Here is a 236-residue protein sequence, read N- to C-terminus: Small ribosomal subunit protein uS2c (236 aa).

The protein belongs to the universal ribosomal protein uS2 family.

The protein resides in the plastid. It is found in the chloroplast. The polypeptide is Small ribosomal subunit protein uS2c (rps2) (Populus alba (White poplar)).